The following is a 426-amino-acid chain: Serine--tRNA ligase (426 aa).

Residue 232–234 (TAE) coordinates L-serine. 263–265 (RRE) is a binding site for ATP. An L-serine-binding site is contributed by E286. 350–353 (EISS) is a binding site for ATP. S385 provides a ligand contact to L-serine.

Belongs to the class-II aminoacyl-tRNA synthetase family. Type-1 seryl-tRNA synthetase subfamily. Homodimer. The tRNA molecule binds across the dimer.

The protein localises to the cytoplasm. The catalysed reaction is tRNA(Ser) + L-serine + ATP = L-seryl-tRNA(Ser) + AMP + diphosphate + H(+). It carries out the reaction tRNA(Sec) + L-serine + ATP = L-seryl-tRNA(Sec) + AMP + diphosphate + H(+). It functions in the pathway aminoacyl-tRNA biosynthesis; selenocysteinyl-tRNA(Sec) biosynthesis; L-seryl-tRNA(Sec) from L-serine and tRNA(Sec): step 1/1. Functionally, catalyzes the attachment of serine to tRNA(Ser). Is also able to aminoacylate tRNA(Sec) with serine, to form the misacylated tRNA L-seryl-tRNA(Sec), which will be further converted into selenocysteinyl-tRNA(Sec). The protein is Serine--tRNA ligase of Fervidobacterium nodosum (strain ATCC 35602 / DSM 5306 / Rt17-B1).